The sequence spans 246 residues: Putative L,D-transpeptidase YafK (246 aa).

The first 19 residues, 1 to 19, serve as a signal peptide directing secretion; the sequence is MRKIALILAMLLIPCVSFA. The 131-residue stretch at 44-174 folds into the L,D-TPase catalytic domain; sequence VYIQIFKEER…GQPSVQVSIY (131 aa). The active-site Proton donor/acceptor is the His135. The active-site Nucleophile is Cys143.

This sequence belongs to the YkuD family.

It participates in cell wall biogenesis; peptidoglycan biosynthesis. This Escherichia coli O157:H7 protein is Putative L,D-transpeptidase YafK (yafK).